Consider the following 340-residue polypeptide: Glycerol-3-phosphate dehydrogenase [NAD(P)+] (340 aa).

Positions 12, 13, and 110 each coordinate NADPH. Sn-glycerol 3-phosphate is bound by residues lysine 110, glycine 141, and serine 143. NADPH is bound at residue alanine 145. The sn-glycerol 3-phosphate site is built by lysine 196, aspartate 249, serine 259, arginine 260, and asparagine 261. Lysine 196 serves as the catalytic Proton acceptor. Arginine 260 contributes to the NADPH binding site. NADPH-binding residues include valine 284 and glutamate 286.

It belongs to the NAD-dependent glycerol-3-phosphate dehydrogenase family.

The protein localises to the cytoplasm. It catalyses the reaction sn-glycerol 3-phosphate + NAD(+) = dihydroxyacetone phosphate + NADH + H(+). The enzyme catalyses sn-glycerol 3-phosphate + NADP(+) = dihydroxyacetone phosphate + NADPH + H(+). Its pathway is membrane lipid metabolism; glycerophospholipid metabolism. Its function is as follows. Catalyzes the reduction of the glycolytic intermediate dihydroxyacetone phosphate (DHAP) to sn-glycerol 3-phosphate (G3P), the key precursor for phospholipid synthesis. This chain is Glycerol-3-phosphate dehydrogenase [NAD(P)+], found in Latilactobacillus sakei subsp. sakei (strain 23K) (Lactobacillus sakei subsp. sakei).